The primary structure comprises 246 residues: Acetoacetate decarboxylase (246 aa).

Lysine 116 (schiff-base intermediate with acetoacetate) is an active-site residue.

It belongs to the ADC family.

The catalysed reaction is acetoacetate + H(+) = acetone + CO2. Catalyzes the conversion of acetoacetate to acetone and carbon dioxide. This chain is Acetoacetate decarboxylase, found in Burkholderia cenocepacia (strain ATCC BAA-245 / DSM 16553 / LMG 16656 / NCTC 13227 / J2315 / CF5610) (Burkholderia cepacia (strain J2315)).